We begin with the raw amino-acid sequence, 156 residues long: Arginine repressor (156 aa).

It belongs to the ArgR family.

The protein localises to the cytoplasm. It participates in amino-acid biosynthesis; L-arginine biosynthesis [regulation]. Functionally, regulates arginine biosynthesis genes. In Edwardsiella ictaluri (strain 93-146), this protein is Arginine repressor.